A 169-amino-acid polypeptide reads, in one-letter code: Methanogen homoaconitase small subunit (169 aa).

Residues 27–30 (YLRT) carry the YLRT motif.

The protein belongs to the LeuD family. LeuD type 2 subfamily. Heterotetramer of 2 HacA and 2 HacB proteins.

The catalysed reaction is (2R)-homocitrate = (2R,3S)-homoisocitrate. It catalyses the reaction (2R)-homocitrate = cis-homoaconitate + H2O. The enzyme catalyses (2R,3S)-homoisocitrate = cis-homoaconitate + H2O. It carries out the reaction cis-(homo)2aconitate + H2O = (2R,3S)-iso(homo)2citrate. The catalysed reaction is cis-(homo)3aconitate + H2O = (2R,3S)-iso(homo)3citrate. Its pathway is organic acid metabolism; 2-oxosuberate biosynthesis. Functionally, component of a hydro-lyase with broad substrate specificity for cis-unsaturated tricarboxylic acids. Catalyzes both the reversible dehydration of (R)-homocitrate ((R)-2-hydroxybutane-1,2,4-tricarboxylate) to produce cis-homoaconitate ((Z)-but-1-ene-1,2,4-tricarboxylate), and its hydration to homoisocitrate ((1R,2S)-1-hydroxybutane-1,2,4-tricarboxylate). Is also able to hydrate the analogous longer chain substrates cis-homo(2)-aconitate, cis-homo(3)-aconitate. These reactions are part of the biosynthesis pathway of coenzyme B. This Methanosarcina mazei (strain ATCC BAA-159 / DSM 3647 / Goe1 / Go1 / JCM 11833 / OCM 88) (Methanosarcina frisia) protein is Methanogen homoaconitase small subunit (hacB).